The primary structure comprises 425 residues: O-methyltransferase AMT9 (425 aa).

S-adenosyl-L-methionine is bound by residues 257–258 (GG), D280, 306–307 (DF), R322, and R323. The active-site Proton acceptor is H326.

Belongs to the class I-like SAM-binding methyltransferase superfamily. Cation-independent O-methyltransferase family.

The protein operates within mycotoxin biosynthesis. Its function is as follows. O-methyltransferase; part of the gene clusters that mediate the biosynthesis of AM-toxins, host-selective toxins (HSTs) causing Alternaria blotch on apple, a worldwide distributed disease. AM-toxins are cyclic depsipeptides containing the 3 residues 2-hydroxy-isovaleric acid (2-HIV), dehydroalanine, L-alanine which are common for all 3 AM-toxins I to III. The fourth precursor is L-alpha-amino-methoxyphenyl-valeric acid (L-Amv) for AM-toxin I, L-alpha-amino-phenyl-valeric acid (L-Apv) for AM-toxin II, and L-alpha-amino-hydroxyphenyl-valeric acid (L-Ahv) for AM-toxin III. AM-toxins have two target sites for affecting susceptible apple cells; they cause invagination of the plasma membrane and electrolyte loss and chloroplast disorganization. The non-ribosomal peptide synthetase AMT1 contains 4 catalytic modules and is responsible for activation of each residue in AM-toxin. The aldo-keto reductase AMT2 catalyzes the conversion of 2-keto-isovaleric acid (2-KIV) to 2-hydroxy-isovaleric acid (2-HIV), one of the precursor residues incorporated by AMT1 during AM-toxin biosynthesis, by reduction of its ketone to an alcohol. The cytochrome P450 monooxygenase AMT3 and the thioesterase AMT4 are also important for AM-toxin production, but their exact function within the AM-toxin biosynthesis are not known yet. Up to 21 proteins (including AMT1 to AMT4) are predicted to be involved in AM-toxin biosynthesis since their expression ishighly up-regulated in AM-toxin-producing cultures. This chain is O-methyltransferase AMT9, found in Alternaria alternata (Alternaria rot fungus).